The primary structure comprises 659 residues: Zeaxanthin epoxidase, chloroplastic (659 aa).

Residues 1–50 (MALLSATAPAKTRFSLFSHEEAQHPHPHALSACCGGGASGKRQRARARVA) constitute a chloroplast transit peptide. Residues 79-107 (RVLVAGGGIGGLVLALAARRKGYEVTVFE) and 357-370 (TFNWGKGRVTLLGD) each bind FAD. Positions 553–607 (LSIGSRSDPSNSTASLALPLPQISENHATITCKNKAFYVTDNGSEHGTWITDNEG) constitute an FHA domain.

The cofactor is FAD. Expressed in young microspores.

Its subcellular location is the plastid. The protein localises to the chloroplast membrane. It is found in the chloroplast thylakoid membrane. The enzyme catalyses all-trans-zeaxanthin + 4 reduced [2Fe-2S]-[ferredoxin] + 2 O2 + 4 H(+) = all-trans-violaxanthin + 4 oxidized [2Fe-2S]-[ferredoxin] + 2 H2O. The protein operates within plant hormone biosynthesis; abscisate biosynthesis. Functionally, zeaxanthin epoxidase that plays an important role in the xanthophyll cycle and abscisic acid (ABA) biosynthesis. Converts zeaxanthin into antheraxanthin and subsequently violaxanthin. Required for resistance to osmotic and drought stresses, seed development and dormancy. The chain is Zeaxanthin epoxidase, chloroplastic (ZEP) from Oryza sativa subsp. japonica (Rice).